We begin with the raw amino-acid sequence, 364 residues long: Deoxyribonuclease-2-alpha (364 aa).

The first 21 residues, 1–21 (MATLSPLLLAALLWVPVGTLT), serve as a signal peptide directing secretion. The cysteines at positions 22 and 161 are disulfide-linked. 6 N-linked (GlcNAc...) asparagine glycosylation sites follow: asparagine 72, asparagine 88, asparagine 171, asparagine 214, asparagine 268, and asparagine 292. 2 disulfide bridges follow: cysteine 269/cysteine 349 and cysteine 310/cysteine 329. Histidine 297 is an active-site residue.

It belongs to the DNase II family.

The protein localises to the lysosome. It catalyses the reaction Endonucleolytic cleavage to nucleoside 3'-phosphates and 3'-phosphooligonucleotide end-products.. Hydrolyzes DNA under acidic conditions with a preference for double-stranded DNA. Plays a major role in the clearance of nucleic acids generated through apoptosis, hence preventing autoinflammation. Necessary for proper fetal development and for definitive erythropoiesis in fetal liver and bone marrow, where it degrades nuclear DNA expelled from erythroid precursor cells. This is Deoxyribonuclease-2-alpha (DNASE2) from Sus scrofa (Pig).